The primary structure comprises 279 residues: Ribosomal RNA small subunit methyltransferase I (279 aa).

The protein belongs to the methyltransferase superfamily. RsmI family.

Its subcellular location is the cytoplasm. It carries out the reaction cytidine(1402) in 16S rRNA + S-adenosyl-L-methionine = 2'-O-methylcytidine(1402) in 16S rRNA + S-adenosyl-L-homocysteine + H(+). In terms of biological role, catalyzes the 2'-O-methylation of the ribose of cytidine 1402 (C1402) in 16S rRNA. The polypeptide is Ribosomal RNA small subunit methyltransferase I (Synechocystis sp. (strain ATCC 27184 / PCC 6803 / Kazusa)).